A 72-amino-acid chain; its full sequence is Conotoxin VnMKLT2-011 (72 aa).

Positions 1–23 (MMKLTCVLIIAVLFLTACQLTTA) are cleaved as a signal peptide. Positions 24–42 (ETRDEYRAVRSSDEVRNSR) are excised as a propeptide. 3 disulfides stabilise this stretch: C44/C57, C51/C62, and C56/C71.

It belongs to the conotoxin O1 superfamily. Expressed by the venom duct.

It is found in the secreted. The protein is Conotoxin VnMKLT2-011 of Conus ventricosus (Mediterranean cone).